The chain runs to 891 residues: Major core protein 4a precursor (891 aa).

The protein belongs to the poxviridae protein P4a family. In terms of assembly, interacts with P39/A4.

The protein localises to the virion. Core protein 4a is the most abundant virion protein. Major component of the virion core that undergoes proteolytic processing during the immature virion (IV) to mature virion (MV) transition. The sequence is that of Major core protein 4a precursor from Fowlpox virus (strain NVSL) (FPV).